A 406-amino-acid chain; its full sequence is 2,3-bisphosphoglycerate-independent phosphoglycerate mutase (406 aa).

This sequence belongs to the BPG-independent phosphoglycerate mutase family. A-PGAM subfamily.

The enzyme catalyses (2R)-2-phosphoglycerate = (2R)-3-phosphoglycerate. The protein operates within carbohydrate degradation; glycolysis; pyruvate from D-glyceraldehyde 3-phosphate: step 3/5. In terms of biological role, catalyzes the interconversion of 2-phosphoglycerate and 3-phosphoglycerate. The chain is 2,3-bisphosphoglycerate-independent phosphoglycerate mutase from Methanococcus maripaludis (strain C7 / ATCC BAA-1331).